The sequence spans 305 residues: UDP-3-O-acyl-N-acetylglucosamine deacetylase (305 aa).

Zn(2+) contacts are provided by His79, His238, and Asp242. Catalysis depends on His265, which acts as the Proton donor.

It belongs to the LpxC family. Zn(2+) serves as cofactor.

The catalysed reaction is a UDP-3-O-[(3R)-3-hydroxyacyl]-N-acetyl-alpha-D-glucosamine + H2O = a UDP-3-O-[(3R)-3-hydroxyacyl]-alpha-D-glucosamine + acetate. Its pathway is glycolipid biosynthesis; lipid IV(A) biosynthesis; lipid IV(A) from (3R)-3-hydroxytetradecanoyl-[acyl-carrier-protein] and UDP-N-acetyl-alpha-D-glucosamine: step 2/6. Its function is as follows. Catalyzes the hydrolysis of UDP-3-O-myristoyl-N-acetylglucosamine to form UDP-3-O-myristoylglucosamine and acetate, the committed step in lipid A biosynthesis. The sequence is that of UDP-3-O-acyl-N-acetylglucosamine deacetylase from Salmonella paratyphi A (strain ATCC 9150 / SARB42).